A 706-amino-acid polypeptide reads, in one-letter code: Ribosomal RNA large subunit methyltransferase K/L (706 aa).

The THUMP domain occupies 43-154 (LMYQSLLWSR…RDMASVALDL (112 aa)).

It belongs to the methyltransferase superfamily. RlmKL family.

Its subcellular location is the cytoplasm. The enzyme catalyses guanosine(2445) in 23S rRNA + S-adenosyl-L-methionine = N(2)-methylguanosine(2445) in 23S rRNA + S-adenosyl-L-homocysteine + H(+). It catalyses the reaction guanosine(2069) in 23S rRNA + S-adenosyl-L-methionine = N(2)-methylguanosine(2069) in 23S rRNA + S-adenosyl-L-homocysteine + H(+). Specifically methylates the guanine in position 2445 (m2G2445) and the guanine in position 2069 (m7G2069) of 23S rRNA. This is Ribosomal RNA large subunit methyltransferase K/L from Yersinia pestis bv. Antiqua (strain Antiqua).